Consider the following 201-residue polypeptide: Histone-like protein HC2 (201 aa).

The disordered stretch occupies residues 1 to 69 (MLGVQKKCST…VAKKATAKKA (69 aa)). 2 stretches are compositionally biased toward basic residues: residues 8–50 (CSTR…KTVA) and 59–69 (PVAKKATAKKA).

It belongs to the histone H1/H5 family. HCT subfamily.

Might have a role in establishing the nucleoid structure of elementary bodies. The protein is Histone-like protein HC2 (hctB) of Chlamydia trachomatis serovar D (strain ATCC VR-885 / DSM 19411 / UW-3/Cx).